The sequence spans 432 residues: 3-phosphoshikimate 1-carboxyvinyltransferase (432 aa).

Positions 22, 23, and 27 each coordinate 3-phosphoshikimate. K22 is a binding site for phosphoenolpyruvate. Positions 96 and 127 each coordinate phosphoenolpyruvate. The 3-phosphoshikimate site is built by S173, S174, Q175, S201, D316, N339, and K343. Residue Q175 coordinates phosphoenolpyruvate. D316 serves as the catalytic Proton acceptor. Phosphoenolpyruvate-binding residues include R347, R391, and K416.

This sequence belongs to the EPSP synthase family. As to quaternary structure, monomer.

It localises to the cytoplasm. The enzyme catalyses 3-phosphoshikimate + phosphoenolpyruvate = 5-O-(1-carboxyvinyl)-3-phosphoshikimate + phosphate. Its pathway is metabolic intermediate biosynthesis; chorismate biosynthesis; chorismate from D-erythrose 4-phosphate and phosphoenolpyruvate: step 6/7. Functionally, catalyzes the transfer of the enolpyruvyl moiety of phosphoenolpyruvate (PEP) to the 5-hydroxyl of shikimate-3-phosphate (S3P) to produce enolpyruvyl shikimate-3-phosphate and inorganic phosphate. The polypeptide is 3-phosphoshikimate 1-carboxyvinyltransferase (Haemophilus influenzae (strain PittGG)).